A 458-amino-acid polypeptide reads, in one-letter code: PH domain-containing protein DDB_G0274775 (458 aa).

In terms of domain architecture, PH spans 15–112 (PSDREGWLTK…WMESIKRNLD (98 aa)). Positions 111-154 (LDGEGGMKSGGNDIVSSPKINSEPTPKVNQNGSAPEKSSLSSPR) are disordered. Polar residues predominate over residues 124 to 142 (IVSSPKINSEPTPKVNQNG). Over residues 143–154 (SAPEKSSLSSPR) the composition is skewed to low complexity.

This Dictyostelium discoideum (Social amoeba) protein is PH domain-containing protein DDB_G0274775.